Reading from the N-terminus, the 274-residue chain is tRNA (guanine-N(7)-)-methyltransferase (274 aa).

A disordered region spans residues 16–40; the sequence is ASASRGAATGSRGVAPAVPRGGAPA. 4 residues coordinate S-adenosyl-L-methionine: Glu-106, Glu-131, Asp-158, and Asp-181. Residue Asp-181 is part of the active site. Substrate is bound by residues Lys-185, Asp-217, and 252–255; that span reads TKFE.

This sequence belongs to the class I-like SAM-binding methyltransferase superfamily. TrmB family.

The catalysed reaction is guanosine(46) in tRNA + S-adenosyl-L-methionine = N(7)-methylguanosine(46) in tRNA + S-adenosyl-L-homocysteine. It functions in the pathway tRNA modification; N(7)-methylguanine-tRNA biosynthesis. In terms of biological role, catalyzes the formation of N(7)-methylguanine at position 46 (m7G46) in tRNA. The protein is tRNA (guanine-N(7)-)-methyltransferase of Verminephrobacter eiseniae (strain EF01-2).